A 263-amino-acid chain; its full sequence is Syntaxin pep12 (263 aa).

The interval 140 to 159 (RNVSLSNNSSGQRQPLTESK) is disordered. Polar residues predominate over residues 142 to 159 (VSLSNNSSGQRQPLTESK). Phosphoserine occurs at positions 148 and 163. Residues 169–231 (QRLINERQGE…KNASRQLQIA (63 aa)) form the t-SNARE coiled-coil homology domain.

It belongs to the syntaxin family.

The protein localises to the endoplasmic reticulum. Its function is as follows. Has a role in vesicle-mediated transport but not with protein transport from Golgi to vesicle. This chain is Syntaxin pep12 (pep12), found in Schizosaccharomyces pombe (strain 972 / ATCC 24843) (Fission yeast).